Here is a 313-residue protein sequence, read N- to C-terminus: Ribosomal RNA small subunit methyltransferase H (313 aa).

Residues 35 to 37 (GGH), aspartate 55, phenylalanine 80, aspartate 102, and glutamine 109 contribute to the S-adenosyl-L-methionine site.

This sequence belongs to the methyltransferase superfamily. RsmH family.

It localises to the cytoplasm. The enzyme catalyses cytidine(1402) in 16S rRNA + S-adenosyl-L-methionine = N(4)-methylcytidine(1402) in 16S rRNA + S-adenosyl-L-homocysteine + H(+). In terms of biological role, specifically methylates the N4 position of cytidine in position 1402 (C1402) of 16S rRNA. The chain is Ribosomal RNA small subunit methyltransferase H from Shewanella frigidimarina (strain NCIMB 400).